The primary structure comprises 603 residues: DNA ligase (603 aa).

Residue Glu-262 participates in ATP binding. Lys-264 (N6-AMP-lysine intermediate) is an active-site residue. 6 residues coordinate ATP: Arg-269, Arg-285, Glu-315, Phe-355, Arg-432, and Lys-438.

It belongs to the ATP-dependent DNA ligase family. The cofactor is Mg(2+).

The enzyme catalyses ATP + (deoxyribonucleotide)n-3'-hydroxyl + 5'-phospho-(deoxyribonucleotide)m = (deoxyribonucleotide)n+m + AMP + diphosphate.. DNA ligase that seals nicks in double-stranded DNA during DNA replication, DNA recombination and DNA repair. This chain is DNA ligase, found in Caldivirga maquilingensis (strain ATCC 700844 / DSM 13496 / JCM 10307 / IC-167).